The chain runs to 151 residues: Exosporium protein B (151 aa).

The protein localises to the spore wall. The polypeptide is Exosporium protein B (Clostridium sporogenes (strain ATCC 15579)).